The primary structure comprises 329 residues: Terpene synthase 7 (329 aa).

A DDxx(x)D/E motif motif is present at residues 99–104; the sequence is DDLYLE. The NDxxSxxxD/E motif motif lies at 230–238; sequence NDIHSFNKE.

This sequence belongs to the terpene synthase family.

Terpene synthase that converts its substrate farnesyl diphosphate (FPP) into 6 yet unidentified sesquiterpenes. The polypeptide is Terpene synthase 7 (Dictyostelium purpureum (Slime mold)).